Here is a 269-residue protein sequence, read N- to C-terminus: Tryptophan synthase alpha chain (269 aa).

Residues Glu-50 and Asp-61 each act as proton acceptor in the active site.

This sequence belongs to the TrpA family. In terms of assembly, tetramer of two alpha and two beta chains.

It catalyses the reaction (1S,2R)-1-C-(indol-3-yl)glycerol 3-phosphate + L-serine = D-glyceraldehyde 3-phosphate + L-tryptophan + H2O. It functions in the pathway amino-acid biosynthesis; L-tryptophan biosynthesis; L-tryptophan from chorismate: step 5/5. The alpha subunit is responsible for the aldol cleavage of indoleglycerol phosphate to indole and glyceraldehyde 3-phosphate. The protein is Tryptophan synthase alpha chain of Francisella tularensis subsp. holarctica (strain FTNF002-00 / FTA).